We begin with the raw amino-acid sequence, 395 residues long: Elongation factor Tu (395 aa).

A tr-type G domain is found at 10 to 204 (KSHVNVGTLG…AVDEYIPTPE (195 aa)). The tract at residues 19 to 26 (GHVDHGKT) is G1. A GTP-binding site is contributed by 19–26 (GHVDHGKT). A Mg(2+)-binding site is contributed by Thr-26. A G2 region spans residues 60-64 (GITIS). Residues 81–84 (DCPG) form a G3 region. GTP contacts are provided by residues 81–85 (DCPGH) and 136–139 (NKTD). A G4 region spans residues 136-139 (NKTD). Residues 174 to 176 (SAL) are G5.

The protein belongs to the TRAFAC class translation factor GTPase superfamily. Classic translation factor GTPase family. EF-Tu/EF-1A subfamily. As to quaternary structure, monomer.

The protein localises to the cytoplasm. The catalysed reaction is GTP + H2O = GDP + phosphate + H(+). Functionally, GTP hydrolase that promotes the GTP-dependent binding of aminoacyl-tRNA to the A-site of ribosomes during protein biosynthesis. In Oceanobacillus iheyensis (strain DSM 14371 / CIP 107618 / JCM 11309 / KCTC 3954 / HTE831), this protein is Elongation factor Tu.